We begin with the raw amino-acid sequence, 480 residues long: UDP-glycosyltransferase 72B2 (480 aa).

Residues S277, 347–349 (APQ), 364–372 (HCGWNSTLE), and 386–389 (FAEQ) each bind UDP-alpha-D-glucose.

This sequence belongs to the UDP-glycosyltransferase family.

The chain is UDP-glycosyltransferase 72B2 (UGT72B2) from Arabidopsis thaliana (Mouse-ear cress).